Consider the following 338-residue polypeptide: Glycerol-3-phosphate dehydrogenase [NAD(P)+] (338 aa).

Residues serine 18, tyrosine 19, histidine 39, and lysine 113 each coordinate NADPH. Positions 113, 142, and 144 each coordinate sn-glycerol 3-phosphate. Alanine 146 lines the NADPH pocket. 5 residues coordinate sn-glycerol 3-phosphate: lysine 198, aspartate 251, serine 261, arginine 262, and asparagine 263. The active-site Proton acceptor is lysine 198. NADPH is bound at residue arginine 262. Residues valine 286 and glutamate 288 each contribute to the NADPH site.

The protein belongs to the NAD-dependent glycerol-3-phosphate dehydrogenase family.

It localises to the cytoplasm. The catalysed reaction is sn-glycerol 3-phosphate + NAD(+) = dihydroxyacetone phosphate + NADH + H(+). The enzyme catalyses sn-glycerol 3-phosphate + NADP(+) = dihydroxyacetone phosphate + NADPH + H(+). The protein operates within membrane lipid metabolism; glycerophospholipid metabolism. In terms of biological role, catalyzes the reduction of the glycolytic intermediate dihydroxyacetone phosphate (DHAP) to sn-glycerol 3-phosphate (G3P), the key precursor for phospholipid synthesis. The protein is Glycerol-3-phosphate dehydrogenase [NAD(P)+] of Photobacterium profundum (strain SS9).